The primary structure comprises 103 residues: MSALTKASGSLKSVDYEVFGRVQGVCFRMYTEEEARKLGVVGWVKNTSQGTVTGQVQGPEDKVNAMKSWLSKVGSPSSRIDRTKFSNEKEISKLDFSGFSTRY.

Position 2 is an N-acetylserine (Ser-2). One can recognise an Acylphosphatase-like domain in the interval 13 to 103 (SVDYEVFGRV…LDFSGFSTRY (91 aa)). Residues Arg-28 and Asn-46 contribute to the active site.

The protein belongs to the acylphosphatase family.

It carries out the reaction an acyl phosphate + H2O = a carboxylate + phosphate + H(+). Functionally, its physiological role is not yet clear. The protein is Acylphosphatase-2 (ACYP2) of Gallus gallus (Chicken).